We begin with the raw amino-acid sequence, 901 residues long: Flowering time control protein FPA (901 aa).

3 consecutive RRM domains span residues 18-90, 95-166, and 206-281; these read NNLW…YARP, KSLW…FLRS, and KVLW…YSND. The interval 343-416 is disordered; the sequence is VGKEPNWRRP…SVDGFTPMGV (74 aa). An SPOC domain is found at 441 to 537; it reads WRGMIAKGGT…DDGTTLFLVP (97 aa). Residues 655-736 form a disordered region; that stretch reads SQPAAPESHQ…YPPASNNPNY (82 aa). Polar residues-rich tracts occupy residues 664-682 and 700-716; these read QPMS…SNGL and HDAS…QYTP.

Belongs to the RRM Spen family. In terms of tissue distribution, expressed in roots, leaves, stems and flowers. Highest expression in flower stems and meristematic regions.

It is found in the nucleus. Its function is as follows. Plays a role in the regulation of flowering time in the autonomous flowering pathway by decreasing FLOWERING LOCUS C mRNA levels. Required for RNA-mediated chromatin silencing of a range of loci in the genome. Cotranscriptionally recognizes aberrant RNA and marks it for silencing. Controls alternative cleavage and polyadenylation on pre-mRNAs and antisense RNAs. Acts redundantly with FCA to prevent the expression of distally polyadenylated antisense RNAs at the FLC locus. The chain is Flowering time control protein FPA (FPA) from Arabidopsis thaliana (Mouse-ear cress).